The primary structure comprises 156 residues: Transcription factor MafF (156 aa).

A basic motif region spans residues Arg51–Lys76. Residues Arg51–Leu114 enclose the bZIP domain. The leucine-zipper stretch occupies residues Leu79–Leu93.

Belongs to the bZIP family. Maf subfamily. Monomer and homo- or heterodimer. Interacts with MIP. Forms high affinity heterodimers with members of the CNC-bZIP family such as NFE2L1/NRF1. As to expression, highly expressed in the lung, lower expression in the brain, thymus, liver, spleen, intestine, kidney, heart, muscle, and ovary. Not significantly expressed in hematopoietic cells.

The protein resides in the nucleus. Since they lack a putative transactivation domain, the small Mafs behave as transcriptional repressors when they dimerize among themselves. However, they seem to serve as transcriptional activators by dimerizing with other (usually larger) basic-zipper proteins, such as NFE2L1/NRF1, and recruiting them to specific DNA-binding sites. Interacts with the upstream promoter region of the oxytocin receptor gene. May be a transcriptional enhancer in the up-regulation of the oxytocin receptor gene at parturition. This Mus musculus (Mouse) protein is Transcription factor MafF (Maff).